Here is a 593-residue protein sequence, read N- to C-terminus: Replication protein E1 (593 aa).

Residues 72 to 74 (KRK) carry the Nuclear localization signal motif. The short motif at 86-95 (LSPRLSAVHI) is the Nuclear export signal element. Position 87 is a phosphoserine; by host (S87). The segment at 134-297 (NQNGAECELN…TIVEHQLASA (164 aa)) is DNA-binding region. The SF3 helicase domain occupies 382–546 (EEWKEIVQFL…LPMSDKDEPL (165 aa)). Residue 422 to 429 (GPPDTGKS) coordinates ATP. Residue K503 forms a Glycyl lysine isopeptide (Lys-Gly) (interchain with G-Cter in SUMO) linkage.

This sequence belongs to the papillomaviridae E1 protein family. Can form hexamers. Interacts with E2 protein; this interaction increases E1 DNA binding specificity. Interacts with host DNA polymerase subunit POLA2. Interacts with host single stranded DNA-binding protein RPA1. Interacts with host TOP1; this interaction stimulates the enzymatic activity of TOP1. In terms of processing, phosphorylated. Post-translationally, sumoylated.

The protein resides in the host nucleus. The catalysed reaction is Couples ATP hydrolysis with the unwinding of duplex DNA by translocating in the 3'-5' direction.. The enzyme catalyses ATP + H2O = ADP + phosphate + H(+). Functionally, ATP-dependent DNA 3'-5' helicase required for initiation of viral DNA replication. It forms a complex with the viral E2 protein. The E1-E2 complex binds to the replication origin which contains binding sites for both proteins. During the initial step, a dimer of E1 interacts with a dimer of protein E2 leading to a complex that binds the viral origin of replication with high specificity. Then, a second dimer of E1 displaces the E2 dimer in an ATP-dependent manner to form the E1 tetramer. Following this, two E1 monomers are added to each half of the site, which results in the formation of two E1 trimers on the viral ori. Subsequently, two hexamers will be created. The double hexamer acts as a bi-directional helicase machinery and unwinds the viral DNA and then recruits the host DNA polymerase to start replication. The chain is Replication protein E1 from Human papillomavirus type 48.